The following is a 237-amino-acid chain: DNA repair protein RecO (237 aa).

Belongs to the RecO family.

Involved in DNA repair and RecF pathway recombination. This Flavobacterium johnsoniae (strain ATCC 17061 / DSM 2064 / JCM 8514 / BCRC 14874 / CCUG 350202 / NBRC 14942 / NCIMB 11054 / UW101) (Cytophaga johnsonae) protein is DNA repair protein RecO.